The sequence spans 115 residues: Large ribosomal subunit protein uL24 (115 aa).

This sequence belongs to the universal ribosomal protein uL24 family. Part of the 50S ribosomal subunit.

In terms of biological role, one of two assembly initiator proteins, it binds directly to the 5'-end of the 23S rRNA, where it nucleates assembly of the 50S subunit. Its function is as follows. One of the proteins that surrounds the polypeptide exit tunnel on the outside of the subunit. The sequence is that of Large ribosomal subunit protein uL24 from Aster yellows witches'-broom phytoplasma (strain AYWB).